Consider the following 372-residue polypeptide: tRNA-specific 2-thiouridylase MnmA (372 aa).

Residues 16–23 (GMSGGVDS) and M42 contribute to the ATP site. The interaction with target base in tRNA stretch occupies residues 102–104 (NPD). C107 serves as the catalytic Nucleophile. An intrachain disulfide couples C107 to C205. Residue G132 participates in ATP binding. The interaction with tRNA stretch occupies residues 155–157 (KDQ). The Cysteine persulfide intermediate role is filled by C205. The segment at 317–318 (RY) is interaction with tRNA.

The protein belongs to the MnmA/TRMU family.

It is found in the cytoplasm. The enzyme catalyses S-sulfanyl-L-cysteinyl-[protein] + uridine(34) in tRNA + AH2 + ATP = 2-thiouridine(34) in tRNA + L-cysteinyl-[protein] + A + AMP + diphosphate + H(+). Catalyzes the 2-thiolation of uridine at the wobble position (U34) of tRNA, leading to the formation of s(2)U34. In Shewanella sp. (strain MR-7), this protein is tRNA-specific 2-thiouridylase MnmA.